A 912-amino-acid polypeptide reads, in one-letter code: Nonsense-mediated mRNA decay factor SMG8 (912 aa).

Residues 565-630 (EHSNRTPDAS…GEDEDETLEQ (66 aa)) form a disordered region. Polar residues predominate over residues 570 to 602 (TPDASTHPPMTNENSPHLSGSQKSQDSASNLTF). Over residues 604–614 (MDEKRDEENKS) the composition is skewed to basic and acidic residues.

Belongs to the SMG8 family.

Its function is as follows. Involved in nonsense-mediated decay (NMD) of mRNAs containing premature stop codons. Probable component of kinase complex containing SMG1 and recruited to stalled ribosomes. This Culex quinquefasciatus (Southern house mosquito) protein is Nonsense-mediated mRNA decay factor SMG8.